The chain runs to 274 residues: Large ribosomal subunit protein uL2 (274 aa).

A disordered region spans residues 214–274 (LGRRPRTRPV…NKYIVERRKK (61 aa)).

The protein belongs to the universal ribosomal protein uL2 family. In terms of assembly, part of the 50S ribosomal subunit. Forms a bridge to the 30S subunit in the 70S ribosome.

One of the primary rRNA binding proteins. Required for association of the 30S and 50S subunits to form the 70S ribosome, for tRNA binding and peptide bond formation. It has been suggested to have peptidyltransferase activity; this is somewhat controversial. Makes several contacts with the 16S rRNA in the 70S ribosome. This Flavobacterium johnsoniae (strain ATCC 17061 / DSM 2064 / JCM 8514 / BCRC 14874 / CCUG 350202 / NBRC 14942 / NCIMB 11054 / UW101) (Cytophaga johnsonae) protein is Large ribosomal subunit protein uL2.